A 319-amino-acid chain; its full sequence is uncharacterized protein (319 aa).

This is an uncharacterized protein from Ictalurid herpesvirus 1 (strain Auburn) (IcHV-1).